A 453-amino-acid polypeptide reads, in one-letter code: Alpha-glucosidase (453 aa).

3 to 69 (TKIVLVGAGS…LPFIVSATTD (67 aa)) lines the NAD(+) pocket. Residue Asn149 coordinates substrate. Cys171 contacts Mn(2+). His172 (proton donor) is an active-site residue. His201 is a binding site for Mn(2+).

As to quaternary structure, homotetramer. Mn(2+) is required as a cofactor. The cofactor is Co(2+). It depends on Ca(2+) as a cofactor. Fe(2+) serves as cofactor. Requires Mg(2+) as cofactor. Sr(2+) is required as a cofactor. The cofactor is Ni(2+). It depends on NAD(+) as a cofactor.

It carries out the reaction Hydrolysis of terminal, non-reducing (1-&gt;4)-linked alpha-D-glucose residues with release of alpha-D-glucose.. The protein operates within glycan degradation; palatinose degradation. With respect to regulation, is inhibited by EDTA in vitro. Its function is as follows. Alpha-glucosidase with broad specificity. Hydrolyzes maltose, palatinose, maltulose, trehalose, trehalulose, turanose, leucrose, sucrose and maltitol. Is not active against alpha-galactosides, e.g. melibiose, and alpha-mannosides. Shows an obligate requirement for an O-alpha-glycosidic linkage, since it is not able to cleave beta-glycosidic bonds (cellobiose, gentiobiose, lactose, sophorose or laminaribiose). Cannot hydrolyze phosphorylated alpha-glucosides derivatives. Seems to be involved in the degradation of palatinose, a sucrose isomer that is formed as a reserve material under conditions of excess carbon availability, sequestered in a form unavailable to competitors such as fungi or the host plant, and whose consumption appears to be postponed until the preferentially metabolized carbon source (e.g. sucrose) is depleted. The protein is Alpha-glucosidase (palH) of Erwinia rhapontici (Pectobacterium rhapontici).